The sequence spans 373 residues: Queuine tRNA-ribosyltransferase (373 aa).

Asp-89 functions as the Proton acceptor in the catalytic mechanism. Residues 89 to 93 (DSGGF), Asp-143, Gln-192, and Gly-220 contribute to the substrate site. Residues 251–257 (GVGTPED) are RNA binding. Residue Asp-270 is the Nucleophile of the active site. Residues 275-279 (TRNAR) are RNA binding; important for wobble base 34 recognition. Zn(2+) contacts are provided by Cys-308, Cys-310, Cys-313, and His-339.

This sequence belongs to the queuine tRNA-ribosyltransferase family. As to quaternary structure, homodimer. Within each dimer, one monomer is responsible for RNA recognition and catalysis, while the other monomer binds to the replacement base PreQ1. The cofactor is Zn(2+).

It catalyses the reaction 7-aminomethyl-7-carbaguanine + guanosine(34) in tRNA = 7-aminomethyl-7-carbaguanosine(34) in tRNA + guanine. The protein operates within tRNA modification; tRNA-queuosine biosynthesis. Its function is as follows. Catalyzes the base-exchange of a guanine (G) residue with the queuine precursor 7-aminomethyl-7-deazaguanine (PreQ1) at position 34 (anticodon wobble position) in tRNAs with GU(N) anticodons (tRNA-Asp, -Asn, -His and -Tyr). Catalysis occurs through a double-displacement mechanism. The nucleophile active site attacks the C1' of nucleotide 34 to detach the guanine base from the RNA, forming a covalent enzyme-RNA intermediate. The proton acceptor active site deprotonates the incoming PreQ1, allowing a nucleophilic attack on the C1' of the ribose to form the product. After dissociation, two additional enzymatic reactions on the tRNA convert PreQ1 to queuine (Q), resulting in the hypermodified nucleoside queuosine (7-(((4,5-cis-dihydroxy-2-cyclopenten-1-yl)amino)methyl)-7-deazaguanosine). This chain is Queuine tRNA-ribosyltransferase, found in Aliarcobacter butzleri (strain RM4018) (Arcobacter butzleri).